The following is a 157-amino-acid chain: MPSQKPTILLLNGPNLNLLGTREPQIYGSTTLSDVQERCLALASSLDVELRHVQSNHEGALVDAIHALRRDLPLAGVVINPGAFTHTSVAIRDALLGVGAPFVELHVSNVHAREAFRHHSYLSDKAVAVICGMGVDGYAVAVEFMAKRLKAQAAAKL.

The Proton acceptor role is filled by tyrosine 27. Positions 80, 86, and 93 each coordinate substrate. The active-site Proton donor is the histidine 106. Residues 107–108 and arginine 117 contribute to the substrate site; that span reads VS.

It belongs to the type-II 3-dehydroquinase family. As to quaternary structure, homododecamer. Adopts a ring-like structure, composed of an arrangement of two hexameric rings stacked on top of one another.

It carries out the reaction 3-dehydroquinate = 3-dehydroshikimate + H2O. It functions in the pathway aromatic compound metabolism; 3,4-dihydroxybenzoate biosynthesis; 3,4-dihydroxybenzoate from 3-dehydroquinate: step 1/2. In terms of biological role, is involved in the catabolism of quinate. Allows the utilization of quinate as carbon source via the beta-ketoadipate pathway. The sequence is that of Catabolic 3-dehydroquinase from Pyricularia oryzae (strain 70-15 / ATCC MYA-4617 / FGSC 8958) (Rice blast fungus).